A 266-amino-acid chain; its full sequence is GTP cyclohydrolase FolE2 1 (266 aa).

The protein belongs to the GTP cyclohydrolase IV family.

It carries out the reaction GTP + H2O = 7,8-dihydroneopterin 3'-triphosphate + formate + H(+). The protein operates within cofactor biosynthesis; 7,8-dihydroneopterin triphosphate biosynthesis; 7,8-dihydroneopterin triphosphate from GTP: step 1/1. Functionally, converts GTP to 7,8-dihydroneopterin triphosphate. The polypeptide is GTP cyclohydrolase FolE2 1 (Dechloromonas aromatica (strain RCB)).